Consider the following 191-residue polypeptide: dCTP deaminase, dUMP-forming (191 aa).

DCTP contacts are provided by residues 101 to 106 (KSSLGR), aspartate 119, 127 to 129 (TLE), glutamine 148, tyrosine 162, and glutamine 174. Glutamate 129 functions as the Proton donor/acceptor in the catalytic mechanism.

The protein belongs to the dCTP deaminase family. Homotrimer.

It catalyses the reaction dCTP + 2 H2O = dUMP + NH4(+) + diphosphate. Its pathway is pyrimidine metabolism; dUMP biosynthesis; dUMP from dCTP: step 1/1. In terms of biological role, bifunctional enzyme that catalyzes both the deamination of dCTP to dUTP and the hydrolysis of dUTP to dUMP without releasing the toxic dUTP intermediate. The polypeptide is dCTP deaminase, dUMP-forming (Streptomyces avermitilis (strain ATCC 31267 / DSM 46492 / JCM 5070 / NBRC 14893 / NCIMB 12804 / NRRL 8165 / MA-4680)).